Consider the following 404-residue polypeptide: Metacaspase-1A (404 aa).

The span at 1–10 (MNPHHSHHHS) shows a compositional bias: basic residues. The tract at residues 1-100 (MNPHHSHHHS…PSDPVSFGQG (100 aa)) is disordered. Residues 24–51 (QQQPPSNPYQYNQPSPQPYQGSQPPQNG) show a composition bias toward low complexity. Active-site residues include H200 and C256.

It belongs to the peptidase C14B family.

In terms of biological role, involved in cell death (apoptosis). The protein is Metacaspase-1A (casA) of Aspergillus niger (strain ATCC MYA-4892 / CBS 513.88 / FGSC A1513).